Consider the following 234-residue polypeptide: MLFIPKLFPAKLIRRYKRFLADVKRDDQDIFTVSVPNTGSMLGLITPNSNIWLSYHNNSKRKYVYQLEIVEANNSLVGINTTLPNKLALEAIQNGLLPELNGYKTILKEQRYGTQSRIDFLLRDDILPDCYLEVKNVHFIRQKELAEFPDTETKRGTRHLEELIKIVQQGKRAAMLYMIQREDCSAFTICRDLDPTYGRKFDLALKSGVEFYAVKCHVSVEGIFPIHRVKIEND.

The protein belongs to the SfsA family.

The chain is Sugar fermentation stimulation protein homolog from Bartonella quintana (strain Toulouse) (Rochalimaea quintana).